Here is a 202-residue protein sequence, read N- to C-terminus: MGGKWSKSSVVGWPAVRERMRRAEPAADGVGAVSRDLEKHGAITSSNTAATNADCAWLEAQEEEEVGFPVTPQVPLRPMTYKAAVDLSHFLKEKGGLEGLIHSQRRQDILDLWIYHTQGYFPDWQNYTPEPGVRYPLTFGWCYKLVPVEPDKVEEANKGENTRLLHPVSLHGMDDPEREVLEWRFDSRLAFHHVARELHPEY.

Gly-2 is lipidated: N-myristoyl glycine; by host. Ser-6 bears the Phosphoserine; by host mark. An acidic; interacts with host PACS1 and PACS2; stabilizes the interaction of NEF/MHC-I with host AP1M1; necessary for MHC-I internalization region spans residues 62–65 (EEEE). The SH3-binding; interaction with Src family tyrosine kinases stretch occupies residues 69–78 (PVTPQVPLRP). Residues 72 to 75 (PQVP) carry the PxxP; stabilizes the interaction of NEF/MHC-I with host AP1M1; necessary for MHC-I internalization motif. Residues 108–124 (DILDLWIYHTQGYFPDW) are mediates dimerization, Nef-PTE1 interaction. A binding to ATP6V1H region spans residues 148 to 180 (VEPDKVEEANKGENTRLLHPVSLHGMDDPEREV). A Dileucine internalization motif; necessary for CD4 internalization motif is present at residues 164 to 165 (LL). A Diacidic; necessary for CD4 internalization motif is present at residues 174–175 (DD).

The protein belongs to the lentivirus primate group Nef protein family. As to quaternary structure, monomer; cytosolic form. Homodimer; membrane bound form. Interacts with Nef associated p21-activated kinase (PAK2); this interaction activates PAK2. Associates with the Nef-MHC-I-AP1 complex; this complex is required for MHC-I internalization. Interacts (via C-terminus) with host PI3-kinase. Interacts with host PACS1; this interaction seems to be weak. Interacts with host PACS2. Interacts with host LCK and MAPK3; these interactions inhibit the kinase activity of the latter. Interacts with host ATP6V1H; this interaction may play a role in CD4 endocytosis. Associates with the CD4-Nef-AP2 complex; this complex is required for CD4 internalization. Interacts with host AP2 subunit alpha and AP2 subunit sigma2. Interacts with TCR-zeta chain; this interaction up-regulates the Fas ligand (FasL) surface expression. Interacts with host HCK, LYN, and SRC; these interactions activate the Src family kinases. Interacts with MAP3K5; this interaction inhibits the Fas and TNFR-mediated death signals. Interacts with beta-COP and PTE1. Interacts with human RACK1; this increases Nef phosphorylation by PKC. Interacts with TP53; this interaction decreases the half-life of TP53, protecting the infected cell against p53-mediated apoptosis. In terms of processing, the virion-associated Nef proteins are cleaved by the viral protease to release the soluble C-terminal core protein. Nef is probably cleaved concomitantly with viral structural proteins on maturation of virus particles. Myristoylated. Post-translationally, phosphorylated on serine residues, probably by host PKCdelta and theta.

It is found in the host cell membrane. The protein resides in the virion. The protein localises to the secreted. It localises to the host Golgi apparatus membrane. Its function is as follows. Factor of infectivity and pathogenicity, required for optimal virus replication. Alters numerous pathways of T-lymphocyte function and down-regulates immunity surface molecules in order to evade host defense and increase viral infectivity. Alters the functionality of other immunity cells, like dendritic cells, monocytes/macrophages and NK cells. In infected CD4(+) T-lymphocytes, down-regulates the surface MHC-I, mature MHC-II, CD4, CD28, CCR5 and CXCR4 molecules. Mediates internalization and degradation of host CD4 through the interaction of with the cytoplasmic tail of CD4, the recruitment of AP-2 (clathrin adapter protein complex 2), internalization through clathrin coated pits, and subsequent transport to endosomes and lysosomes for degradation. Diverts host MHC-I molecules to the trans-Golgi network-associated endosomal compartments by an endocytic pathway to finally target them for degradation. MHC-I down-regulation may involve AP-1 (clathrin adapter protein complex 1) or possibly Src family kinase-ZAP70/Syk-PI3K cascade recruited by PACS2. In consequence infected cells are masked for immune recognition by cytotoxic T-lymphocytes. Decreasing the number of immune receptors also prevents reinfection by more HIV particles (superinfection). Down-regulates host SERINC3 and SERINC5 thereby excluding these proteins from the viral particles. Virion infectivity is drastically higher when SERINC3 or SERINC5 are excluded from the viral envelope, because these host antiviral proteins impair the membrane fusion event necessary for subsequent virion penetration. In terms of biological role, bypasses host T-cell signaling by inducing a transcriptional program nearly identical to that of anti-CD3 cell activation. Interaction with TCR-zeta chain up-regulates the Fas ligand (FasL). Increasing surface FasL molecules and decreasing surface MHC-I molecules on infected CD4(+) cells send attacking cytotoxic CD8+ T-lymphocytes into apoptosis. Functionally, plays a role in optimizing the host cell environment for viral replication without causing cell death by apoptosis. Protects the infected cells from apoptosis in order to keep them alive until the next virus generation is ready to strike. Inhibits the Fas and TNFR-mediated death signals by blocking MAP3K5/ASK1. Decreases the half-life of TP53, protecting the infected cell against p53-mediated apoptosis. Inhibits the apoptotic signals regulated by the Bcl-2 family proteins through the formation of a Nef/PI3-kinase/PAK2 complex that leads to activation of PAK2 and induces phosphorylation of host BAD. Its function is as follows. Extracellular Nef protein targets CD4(+) T-lymphocytes for apoptosis by interacting with CXCR4 surface receptors. The polypeptide is Protein Nef (Human immunodeficiency virus type 1 group M subtype B (isolate Lai) (HIV-1)).